Here is a 323-residue protein sequence, read N- to C-terminus: UDP-N-acetylenolpyruvoylglucosamine reductase (323 aa).

Positions 52 to 217 (KSGGAADWLF…VSARLQGEPG (166 aa)) constitute an FAD-binding PCMH-type domain. The active site involves Arg-197. The tract at residues 234-253 (EQSQPVRTKTGGSTFKNPPG) is disordered. Polar residues predominate over residues 235–249 (QSQPVRTKTGGSTFK). Ser-246 functions as the Proton donor in the catalytic mechanism. Residue Glu-316 is part of the active site.

Belongs to the MurB family. FAD serves as cofactor.

The protein localises to the cytoplasm. The enzyme catalyses UDP-N-acetyl-alpha-D-muramate + NADP(+) = UDP-N-acetyl-3-O-(1-carboxyvinyl)-alpha-D-glucosamine + NADPH + H(+). It participates in cell wall biogenesis; peptidoglycan biosynthesis. Cell wall formation. The sequence is that of UDP-N-acetylenolpyruvoylglucosamine reductase from Erythrobacter litoralis (strain HTCC2594).